The sequence spans 258 residues: Tetraspanin-15 (258 aa).

The Cytoplasmic segment spans residues 1-20 (MGALGDSAYGARGRLIKFSY). A helical transmembrane segment spans residues 21–41 (IVTALISILFSISCICYGIWL). Residues 42 to 62 (LARRSQYAELVSPSLYVDVGR) are Extracellular-facing. Residues 63-83 (ILVIISILSILNYLICFYAIF) traverse the membrane as a helical segment. At 84-93 (KEMRCFVTSC) the chain is on the cytoplasmic side. A helical transmembrane segment spans residues 94 to 114 (AVASIVIAVMLIIGGCIGLNF). The Extracellular segment spans residues 115–223 (RDQLTHYTPL…STCYEPLQND (109 aa)). The chain crosses the membrane as a helical span at residues 224–244 (LLHVMNVASWLCITNAIVQII). At 245 to 258 (PSVAGCWYSKLIRK) the chain is on the cytoplasmic side.

It belongs to the tetraspanin (TM4SF) family. Interacts with doxa-1 and bli-3. As to expression, expressed in the body wall (hyp7 hypodermal syncitium), pharynx and vulva. Expressed in a punctate pattern along the thick region of the hypodermis.

Its subcellular location is the membrane. In terms of biological role, plays a role in cuticle biogenesis. In complex with doxa-1 and the dual oxidase bli-3, promotes the generation of reactive oxygen species (ROS) and tyrosine cross-linking of collagen, thus stabilizing cuticular extracellular matrix. This is Tetraspanin-15 from Caenorhabditis elegans.